The sequence spans 420 residues: Dihydrolipoyllysine-residue succinyltransferase component of 2-oxoglutarate dehydrogenase complex (420 aa).

One can recognise a Lipoyl-binding domain in the interval 3–78 (KINILVPDLP…ISQQTLGEIN (76 aa)). Lys-44 is subject to N6-lipoyllysine. Residues His-391 and Asp-395 contribute to the active site.

Belongs to the 2-oxoacid dehydrogenase family. As to quaternary structure, forms a 24-polypeptide structural core with octahedral symmetry. Part of the 2-oxoglutarate dehydrogenase (OGDH) complex composed of E1 (2-oxoglutarate dehydrogenase), E2 (dihydrolipoamide succinyltransferase) and E3 (dihydrolipoamide dehydrogenase); the complex contains multiple copies of the three enzymatic components (E1, E2 and E3). It depends on (R)-lipoate as a cofactor.

It carries out the reaction N(6)-[(R)-dihydrolipoyl]-L-lysyl-[protein] + succinyl-CoA = N(6)-[(R)-S(8)-succinyldihydrolipoyl]-L-lysyl-[protein] + CoA. It participates in amino-acid degradation; L-lysine degradation via saccharopine pathway; glutaryl-CoA from L-lysine: step 6/6. In terms of biological role, E2 component of the 2-oxoglutarate dehydrogenase (OGDH) complex which catalyzes the second step in the conversion of 2-oxoglutarate to succinyl-CoA and CO(2). The sequence is that of Dihydrolipoyllysine-residue succinyltransferase component of 2-oxoglutarate dehydrogenase complex (sucB) from Buchnera aphidicola subsp. Acyrthosiphon pisum (strain APS) (Acyrthosiphon pisum symbiotic bacterium).